We begin with the raw amino-acid sequence, 63 residues long: Cytochrome c oxidase subunit 7C, mitochondrial (63 aa).

Residues 1–16 constitute a mitochondrion transit peptide; it reads MWGQGVRRFTTSVVRR. Residues 17–33 are Mitochondrial matrix-facing; the sequence is SHYEEGPGKNLPFSVEN. Lys25 is modified (N6-acetyllysine; alternate). Position 25 is an N6-succinyllysine; alternate (Lys25). Residues 34–60 form a helical membrane-spanning segment; it reads KWRLLAMMTLYLGSGFAAPFFIVRHQL. The Mitochondrial intermembrane segment spans residues 61-63; the sequence is LKK.

It belongs to the cytochrome c oxidase VIIc family. As to quaternary structure, component of the cytochrome c oxidase (complex IV, CIV), a multisubunit enzyme composed of 14 subunits. The complex is composed of a catalytic core of 3 subunits MT-CO1, MT-CO2 and MT-CO3, encoded in the mitochondrial DNA, and 11 supernumerary subunits COX4I, COX5A, COX5B, COX6A, COX6B, COX6C, COX7A, COX7B, COX7C, COX8 and NDUFA4, which are encoded in the nuclear genome. The complex exists as a monomer or a dimer and forms supercomplexes (SCs) in the inner mitochondrial membrane with NADH-ubiquinone oxidoreductase (complex I, CI) and ubiquinol-cytochrome c oxidoreductase (cytochrome b-c1 complex, complex III, CIII), resulting in different assemblies (supercomplex SCI(1)III(2)IV(1) and megacomplex MCI(2)III(2)IV(2)). Interacts with RAB5IF.

The protein resides in the mitochondrion inner membrane. Its pathway is energy metabolism; oxidative phosphorylation. Functionally, component of the cytochrome c oxidase, the last enzyme in the mitochondrial electron transport chain which drives oxidative phosphorylation. The respiratory chain contains 3 multisubunit complexes succinate dehydrogenase (complex II, CII), ubiquinol-cytochrome c oxidoreductase (cytochrome b-c1 complex, complex III, CIII) and cytochrome c oxidase (complex IV, CIV), that cooperate to transfer electrons derived from NADH and succinate to molecular oxygen, creating an electrochemical gradient over the inner membrane that drives transmembrane transport and the ATP synthase. Cytochrome c oxidase is the component of the respiratory chain that catalyzes the reduction of oxygen to water. Electrons originating from reduced cytochrome c in the intermembrane space (IMS) are transferred via the dinuclear copper A center (CU(A)) of subunit 2 and heme A of subunit 1 to the active site in subunit 1, a binuclear center (BNC) formed by heme A3 and copper B (CU(B)). The BNC reduces molecular oxygen to 2 water molecules using 4 electrons from cytochrome c in the IMS and 4 protons from the mitochondrial matrix. In Carlito syrichta (Philippine tarsier), this protein is Cytochrome c oxidase subunit 7C, mitochondrial (COX7C).